Here is a 426-residue protein sequence, read N- to C-terminus: 3-phosphoshikimate 1-carboxyvinyltransferase (426 aa).

3-phosphoshikimate-binding residues include Lys20, Ser21, and Arg25. Lys20 lines the phosphoenolpyruvate pocket. 2 residues coordinate phosphoenolpyruvate: Gly92 and Arg120. 3-phosphoshikimate contacts are provided by Ser165, Gln167, Asp313, and Lys340. Gln167 is a phosphoenolpyruvate binding site. Residue Asp313 is the Proton acceptor of the active site. Residues Arg344 and Arg386 each coordinate phosphoenolpyruvate.

It belongs to the EPSP synthase family. In terms of assembly, monomer.

The protein resides in the cytoplasm. It carries out the reaction 3-phosphoshikimate + phosphoenolpyruvate = 5-O-(1-carboxyvinyl)-3-phosphoshikimate + phosphate. It participates in metabolic intermediate biosynthesis; chorismate biosynthesis; chorismate from D-erythrose 4-phosphate and phosphoenolpyruvate: step 6/7. Functionally, catalyzes the transfer of the enolpyruvyl moiety of phosphoenolpyruvate (PEP) to the 5-hydroxyl of shikimate-3-phosphate (S3P) to produce enolpyruvyl shikimate-3-phosphate and inorganic phosphate. This Brevibacillus brevis (strain 47 / JCM 6285 / NBRC 100599) protein is 3-phosphoshikimate 1-carboxyvinyltransferase.